The primary structure comprises 489 residues: Major aspartyl peptidase 1 (489 aa).

Positions 1 to 16 are cleaved as a signal peptide; that stretch reads MHYLAVALPLLTLALA. Positions 101-432 constitute a Peptidase A1 domain; sequence YAGQVSIGTP…RYNPAAIGFA (332 aa). Residue aspartate 119 is part of the active site. Glycine 121 serves as a coordination point for pepstatin A. Cysteines 132 and 137 form a disulfide. Pepstatin A contacts are provided by threonine 161, glycine 163, and serine 164. Asparagine 266 carries an N-linked (GlcNAc...) asparagine glycan. A pepstatin A-binding site is contributed by tyrosine 286. The active site involves aspartate 317. The pepstatin A site is built by threonine 320 and threonine 321. The cysteines at positions 357 and 391 are disulfide-linked. Residues 442–466 are disordered; it reads AGNPSSSTTGGGTSGSNGGGSSSGA. The segment covering 450–463 has biased composition (gly residues); sequence TGGGTSGSNGGGSS. Residues 456–489 constitute a propeptide, removed at pH 5.0; by autocatalysis; that stretch reads GSNGGGSSSGAMERKGVQLGWLVGAVAVGVAAMI.

It belongs to the peptidase A1 family. In terms of assembly, monomer. In terms of processing, activated by the autocatalytic cleavage of the propeptide. Cleaved at the end of the propeptide promiscuously from residue 76 to residue 79. C-terminal cleavage by autocatalysis at Gly-456 at the pH optimum indicating a possible regulatory or other function of this propeptide.

It localises to the secreted. Its activity is regulated as follows. Activated by low pH. Inhibited by pepstatin A with an IC(50) of 1.4 nM. Inhibited by acetyl pepstatin. Inhibited by HIV antiretroviral therapy protease inhibitors including amprenavir and ritonavir. Inhibited by HIV-1 protease inhibitor brecanavir with an approximate IC(50) of 352 nM. Inhibited by HIV-1 protease inhibitors CGP53437 and GS-8374. From the tested peptidomimetic inhibitor molecules, macrocycles containing P2-P3' tethered side chains, statines in P1 and an alpha amino acid in P2' are the best. From the linear peptidomimetic inhibitors, the ones with a phenylstatine or hydroxyethylamine scissile bond isoster are better than compounds with a reduced bond or a homo-amide. Overall, inhibitors with a phenylalanine side chain, either unsubstituted or with a small substituent, is preferred in P1 while a bulkier P1 side chain leads to lower inhibition. Functionally, possesses prevalent extracellular endopeptidase activity at low pH condition. Required for high-density growth in acidic environments. Broad substrate specificity with preference cleavage of the peptide substrate between hydrophobic amino acids. Cleaves substrate at P1-P1' between Phe-Leu. Positively charged amino acids are preferred at P2. Prefers hydrophobic amino acids at the P3 and P4 positions. Cleaves substrate also at P1'-P2' between Leu-Val to some degree. Required for virulence in mouse inhalation model of infection. The sequence is that of Major aspartyl peptidase 1 from Cryptococcus neoformans var. grubii serotype A (strain H99 / ATCC 208821 / CBS 10515 / FGSC 9487) (Filobasidiella neoformans var. grubii).